Reading from the N-terminus, the 385-residue chain is MTDREQFFRDVNKIVIKIGTSSITRKGCDHTKENCNIDPAFMESIAAQVYELRKHGKEVILVSSGAIGVGLNELGIAPKPREIPIRQAAAAVGQSILMQDWSRAFSKYGMKVAQILLTYEFYSDRVTYLNLRNSISTLLEYEVVPIINENDCTCTNEIEAIFGDNDKLSAMVASKIDADLLIILSDIDGLFDRNPKTHSDAKLLTLIKKITPEIESYGGDPTNFKGVGGMRTKIKAAKICSMAGCYVVIANSEIEDVVTKILSGEEIGTLFLAERHIQKNRARWIILARASGTVRVDAGAKAAVLGKNSLLPAGIVDIEGTFDRGDVVKLECEGKVFAKGITNYTSKELIKIKGAQTNQIDNILGYNNYDNVIKKENIGILEGIN.

Lys17 serves as a coordination point for ATP. Residues Ser64, Asp151, and Asn165 each contribute to the substrate site. 185–186 (SD) contributes to the ATP binding site. The PUA domain occupies 291 to 367 (SGTVRVDAGA…NQIDNILGYN (77 aa)).

It belongs to the glutamate 5-kinase family.

Its subcellular location is the cytoplasm. It catalyses the reaction L-glutamate + ATP = L-glutamyl 5-phosphate + ADP. It functions in the pathway amino-acid biosynthesis; L-proline biosynthesis; L-glutamate 5-semialdehyde from L-glutamate: step 1/2. Its function is as follows. Catalyzes the transfer of a phosphate group to glutamate to form L-glutamate 5-phosphate. This chain is Glutamate 5-kinase, found in Methanosarcina acetivorans (strain ATCC 35395 / DSM 2834 / JCM 12185 / C2A).